Consider the following 213-residue polypeptide: Adenylate kinase (213 aa).

Position 10 to 15 (10 to 15 (GCGKGT)) interacts with ATP. Residues 30 to 59 (STGDLMRKEISLNTTLGLKCQEYMNAGKYV) are NMP. AMP contacts are provided by residues Thr31, Arg36, 57 to 59 (KYV), 83 to 86 (GYPR), and Gln90. An LID region spans residues 124–161 (NRLVCPLCKASFNLETRKPKQEGLCDFDNTKLVKRSDD). Arg125 contributes to the ATP binding site. Zn(2+)-binding residues include Cys128 and Cys131. ATP is bound at residue 134 to 135 (SF). Cys148 and Asp151 together coordinate Zn(2+). The AMP site is built by Arg158 and Arg169. Asn197 is an ATP binding site.

This sequence belongs to the adenylate kinase family. Monomer.

Its subcellular location is the cytoplasm. The enzyme catalyses AMP + ATP = 2 ADP. It participates in purine metabolism; AMP biosynthesis via salvage pathway; AMP from ADP: step 1/1. Catalyzes the reversible transfer of the terminal phosphate group between ATP and AMP. Plays an important role in cellular energy homeostasis and in adenine nucleotide metabolism. This chain is Adenylate kinase, found in Mycoplasma capricolum subsp. capricolum (strain California kid / ATCC 27343 / NCTC 10154).